The primary structure comprises 582 residues: Formate--tetrahydrofolate ligase (582 aa).

65–72 serves as a coordination point for ATP; it reads TPLGEGKT.

The protein belongs to the formate--tetrahydrofolate ligase family.

It carries out the reaction (6S)-5,6,7,8-tetrahydrofolate + formate + ATP = (6R)-10-formyltetrahydrofolate + ADP + phosphate. Its pathway is one-carbon metabolism; tetrahydrofolate interconversion. The protein is Formate--tetrahydrofolate ligase of Vibrio atlanticus (strain LGP32) (Vibrio splendidus (strain Mel32)).